A 499-amino-acid chain; its full sequence is CD-NTase-associated protein 4 (499 aa).

An N-terminal endonuclease domain region spans residues 1-226; that stretch reads MATSVLANWH…DFRFDGAARA (226 aa). Catalysis depends on residues D49 and Q72. Position 49 (D49) interacts with Mg(2+). I73 is a binding site for Mg(2+). The active site involves K74. Residues 258 to 464 are C-terminal SAVED domain; the sequence is FRNVALRSFS…HIFSAAPNAV (207 aa).

Belongs to the Cap4 nuclease family. As to quaternary structure, a monomer in the absence of ligand, in its presence it forms oligomers. Requires Mg(2+) as cofactor.

DNase activity is activated upon ligand binding (cAAG). Inhibited by EDTA. Functionally, effector DNase of a CBASS antivirus system. CBASS (cyclic oligonucleotide-based antiphage signaling system) provides immunity against bacteriophages. The CD-NTase protein (CdnD) synthesizes cyclic nucleotides in response to infection; these serve as specific second messenger signals. The signals activate a diverse range of effectors, leading to bacterial cell death and thus abortive phage infection. A type II-C(AAG) CBASS system. Its function is as follows. Binds second messenger 3',3',3'-cyclic AMP-AMP-GMP (cAAG). In the presence of cAAG (synthesized by the cognate CD-NTase protein in the CBASS operon), endonucleolytically degrades dsDNA to approximately 17 bp length fragments, with a preference for 5'-C|NG sites. Only binds DNA in the presence of cAAG. Not activated by c-di-AMP, c-di-GMP, 3',3'-cyclic GMP-AMP (cGAMP) or the second messenger of A.baumanii strain ATCC 27244. In terms of biological role, protects E.coli against phage T2 infection. When the cdnD-cap2-cap3-cap4 operon is introduced in E.coli there is a more than 10(3) decrease in the efficiency of T2 plaque formation. The operon does not protect against phage T5 and only about 10-fold against T7. Expression of cdnD-cap4 alone protects E.coli against phage T2 infection. The protein is CD-NTase-associated protein 4 of Enterobacter hormaechei subsp. hoffmannii (strain UCI 50).